The following is a 326-amino-acid chain: Peroxidase 46 (326 aa).

Residues 1–27 form the signal peptide; that stretch reads MASSYRINCSTLLHLLMFLSSLLTSSA. Asparagine 28 carries an N-linked (GlcNAc...) asparagine glycan. 4 disulfide bridges follow: cysteine 38–cysteine 114, cysteine 71–cysteine 76, cysteine 120–cysteine 322, and cysteine 199–cysteine 233. Histidine 69 acts as the Proton acceptor in catalysis. Ca(2+) is bound by residues aspartate 70, valine 73, glycine 75, aspartate 77, and serine 79. N-linked (GlcNAc...) asparagine glycosylation is present at asparagine 85. Position 192 (histidine 192) interacts with heme b. Threonine 193 is a binding site for Ca(2+). Ca(2+) is bound by residues aspartate 246, threonine 249, and aspartate 254. N-linked (GlcNAc...) asparagine glycosylation is present at asparagine 278.

The protein belongs to the peroxidase family. Classical plant (class III) peroxidase subfamily. The cofactor is heme b. Requires Ca(2+) as cofactor.

It is found in the secreted. It catalyses the reaction 2 a phenolic donor + H2O2 = 2 a phenolic radical donor + 2 H2O. In terms of biological role, removal of H(2)O(2), oxidation of toxic reductants, biosynthesis and degradation of lignin, suberization, auxin catabolism, response to environmental stresses such as wounding, pathogen attack and oxidative stress. These functions might be dependent on each isozyme/isoform in each plant tissue. In Arabidopsis thaliana (Mouse-ear cress), this protein is Peroxidase 46 (PER46).